Here is a 121-residue protein sequence, read N- to C-terminus: Large ribosomal subunit protein bL12 (121 aa).

Belongs to the bacterial ribosomal protein bL12 family. Homodimer. Part of the ribosomal stalk of the 50S ribosomal subunit. Forms a multimeric L10(L12)X complex, where L10 forms an elongated spine to which 2 to 4 L12 dimers bind in a sequential fashion. Binds GTP-bound translation factors.

Functionally, forms part of the ribosomal stalk which helps the ribosome interact with GTP-bound translation factors. Is thus essential for accurate translation. The polypeptide is Large ribosomal subunit protein bL12 (Escherichia coli O45:K1 (strain S88 / ExPEC)).